A 253-amino-acid chain; its full sequence is Glucosamine-6-phosphate deaminase (253 aa).

The active-site Proton acceptor; for enolization step is Asp-65. Residue Asn-133 is the For ring-opening step of the active site. His-135 serves as the catalytic Proton acceptor; for ring-opening step. The active-site For ring-opening step is the Glu-140.

It belongs to the glucosamine/galactosamine-6-phosphate isomerase family. NagB subfamily.

The catalysed reaction is alpha-D-glucosamine 6-phosphate + H2O = beta-D-fructose 6-phosphate + NH4(+). Its pathway is amino-sugar metabolism; N-acetylneuraminate degradation; D-fructose 6-phosphate from N-acetylneuraminate: step 5/5. Catalyzes the reversible isomerization-deamination of glucosamine 6-phosphate (GlcN6P) to form fructose 6-phosphate (Fru6P) and ammonium ion. The protein is Glucosamine-6-phosphate deaminase of Corynebacterium glutamicum (strain R).